Here is a 407-residue protein sequence, read N- to C-terminus: S-adenosylmethionine synthase (407 aa).

His19 serves as a coordination point for ATP. Asp21 serves as a coordination point for Mg(2+). K(+) is bound at residue Glu47. Positions 60 and 103 each coordinate L-methionine. The segment at 103–113 (QSQEIADGVDT) is flexible loop. Residues 108–131 (ADGVDTSQEARGDGHFEEDDRAGA) are disordered. ATP-binding positions include 178-180 (DGK), Asp258, 264-265 (RK), Ala281, and Lys285. Asp258 contacts L-methionine. Position 289 (Lys289) interacts with L-methionine.

It belongs to the AdoMet synthase family. As to quaternary structure, homotetramer; dimer of dimers. The cofactor is Mg(2+). It depends on K(+) as a cofactor.

The protein localises to the cytoplasm. The catalysed reaction is L-methionine + ATP + H2O = S-adenosyl-L-methionine + phosphate + diphosphate. Its pathway is amino-acid biosynthesis; S-adenosyl-L-methionine biosynthesis; S-adenosyl-L-methionine from L-methionine: step 1/1. In terms of biological role, catalyzes the formation of S-adenosylmethionine (AdoMet) from methionine and ATP. The overall synthetic reaction is composed of two sequential steps, AdoMet formation and the subsequent tripolyphosphate hydrolysis which occurs prior to release of AdoMet from the enzyme. The chain is S-adenosylmethionine synthase from Corynebacterium efficiens (strain DSM 44549 / YS-314 / AJ 12310 / JCM 11189 / NBRC 100395).